Consider the following 325-residue polypeptide: Release factor glutamine methyltransferase (325 aa).

Residues 141-145, Asp164, Trp193, and Asn207 each bind S-adenosyl-L-methionine; that span reads GTGSG. 207–210 contacts substrate; that stretch reads NPPY. Positions 306–325 are disordered; that stretch reads LPPIHIDAKPSAPGNGPTKA.

This sequence belongs to the protein N5-glutamine methyltransferase family. PrmC subfamily.

The catalysed reaction is L-glutaminyl-[peptide chain release factor] + S-adenosyl-L-methionine = N(5)-methyl-L-glutaminyl-[peptide chain release factor] + S-adenosyl-L-homocysteine + H(+). Functionally, methylates the class 1 translation termination release factors RF1/PrfA and RF2/PrfB on the glutamine residue of the universally conserved GGQ motif. This chain is Release factor glutamine methyltransferase, found in Rhodospirillum rubrum (strain ATCC 11170 / ATH 1.1.1 / DSM 467 / LMG 4362 / NCIMB 8255 / S1).